The sequence spans 527 residues: Thymidine kinase (527 aa).

The disordered stretch occupies residues 1 to 57; the sequence is MTGRGQPPKKNDTYDYPRKQPPKNGSYDNYDYPTSTKTRSTNKQRKDSNYPPRETIF. The span at 9 to 18 shows a compositional bias: basic and acidic residues; it reads KKNDTYDYPR. Polar residues predominate over residues 32-41; the sequence is YPTSTKTRST. Residue 216–223 participates in ATP binding; it reads GSIGVGKT. Glu-243 functions as the Proton acceptor in the catalytic mechanism. Residues Tyr-260 and Gln-281 each coordinate substrate. Arg-368 is a binding site for ATP. Position 374 (Arg-374) interacts with substrate.

Belongs to the herpesviridae thymidine kinase family. As to quaternary structure, homodimer.

It carries out the reaction thymidine + ATP = dTMP + ADP + H(+). Its function is as follows. Catalyzes the transfer of the gamma-phospho group of ATP to thymidine to generate dTMP in the salvage pathway of pyrimidine synthesis. The dTMP serves as a substrate for DNA polymerase during viral DNA replication. Allows the virus to be reactivated and to grow in non-proliferative cells lacking a high concentration of phosphorylated nucleic acid precursors. The chain is Thymidine kinase from Saimiriine herpesvirus 2 (strain 11) (SaHV-2).